A 341-amino-acid chain; its full sequence is Phenylalanine--tRNA ligase alpha subunit (341 aa).

Glu-254 is a Mg(2+) binding site.

The protein belongs to the class-II aminoacyl-tRNA synthetase family. Phe-tRNA synthetase alpha subunit type 1 subfamily. In terms of assembly, tetramer of two alpha and two beta subunits. Requires Mg(2+) as cofactor.

The protein resides in the cytoplasm. It catalyses the reaction tRNA(Phe) + L-phenylalanine + ATP = L-phenylalanyl-tRNA(Phe) + AMP + diphosphate + H(+). This is Phenylalanine--tRNA ligase alpha subunit (pheS) from Mycoplasma pneumoniae (strain ATCC 29342 / M129 / Subtype 1) (Mycoplasmoides pneumoniae).